The primary structure comprises 136 residues: Globin-2 (136 aa).

The 134-residue stretch at 1–134 folds into the Globin domain; the sequence is VSQADIAAVQ…ILSQMKIALS (134 aa). Histidine 89 serves as a coordination point for heme b.

This sequence belongs to the globin family. As to quaternary structure, homodimer.

In Phreagena soyoae (Deep-sea cold-seep clam), this protein is Globin-2.